The chain runs to 137 residues: Large ribosomal subunit protein uL16c (137 aa).

Belongs to the universal ribosomal protein uL16 family. As to quaternary structure, part of the 50S ribosomal subunit.

The protein localises to the plastid. It is found in the chloroplast. This Thalassiosira pseudonana (Marine diatom) protein is Large ribosomal subunit protein uL16c.